The sequence spans 451 residues: NADH-quinone oxidoreductase subunit D (451 aa).

It belongs to the complex I 49 kDa subunit family. NDH-1 is composed of 14 different subunits. Subunits NuoB, C, D, E, F, and G constitute the peripheral sector of the complex.

The protein localises to the cell inner membrane. It catalyses the reaction a quinone + NADH + 5 H(+)(in) = a quinol + NAD(+) + 4 H(+)(out). Its function is as follows. NDH-1 shuttles electrons from NADH, via FMN and iron-sulfur (Fe-S) centers, to quinones in the respiratory chain. The immediate electron acceptor for the enzyme in this species is believed to be a menaquinone. Couples the redox reaction to proton translocation (for every two electrons transferred, four hydrogen ions are translocated across the cytoplasmic membrane), and thus conserves the redox energy in a proton gradient. This Salinibacter ruber (strain DSM 13855 / M31) protein is NADH-quinone oxidoreductase subunit D.